A 628-amino-acid polypeptide reads, in one-letter code: Pinene synthase, chloroplastic (628 aa).

The N-terminal 36 residues, 1 to 36 (MALVSTAPLASKSCLHKSLISSTHELKALSRTIPAL), are a transit peptide targeting the chloroplast. Mg(2+)-binding residues include D379, D383, and D531. A DDXXD motif motif is present at residues 379-383 (DDMYD).

Belongs to the terpene synthase family. Tpsd subfamily. Requires Mg(2+) as cofactor. It depends on Mn(2+) as a cofactor. The cofactor is K(+).

Its subcellular location is the plastid. It localises to the chloroplast. It catalyses the reaction (2E)-geranyl diphosphate = (1S,5S)-alpha-pinene + diphosphate. It carries out the reaction (2E)-geranyl diphosphate = (1S,5S)-beta-pinene + diphosphate. It functions in the pathway terpene metabolism; oleoresin biosynthesis. Its function is as follows. Involved in defensive oleoresin formation in conifers in response to insect attack or other injury. Involved in monoterpene (C10) olefins biosynthesis. A mixture of alpha- and beta-pinene is produced by this enzyme. The sequence is that of Pinene synthase, chloroplastic (ag3) from Abies grandis (Grand fir).